Reading from the N-terminus, the 436-residue chain is 3-ketoacyl-CoA thiolase (436 aa).

Residue Cys-99 is the Acyl-thioester intermediate of the active site. Residues His-392 and Cys-422 each act as proton acceptor in the active site.

Belongs to the thiolase-like superfamily. Thiolase family. Heterotetramer of two alpha chains (FadJ) and two beta chains (FadI).

The protein resides in the cytoplasm. It carries out the reaction an acyl-CoA + acetyl-CoA = a 3-oxoacyl-CoA + CoA. It participates in lipid metabolism; fatty acid beta-oxidation. In terms of biological role, catalyzes the final step of fatty acid oxidation in which acetyl-CoA is released and the CoA ester of a fatty acid two carbons shorter is formed. The chain is 3-ketoacyl-CoA thiolase from Shewanella sp. (strain W3-18-1).